The following is a 343-amino-acid chain: Calcium/calmodulin-dependent protein kinase type 1B (343 aa).

The region spanning 15–270 is the Protein kinase domain; sequence YEIRERLGSG…CQQALRHLWI (256 aa). Residues 21-29 and Lys-44 contribute to the ATP site; that span reads LGSGAFSEV. Asp-136 functions as the Proton acceptor in the catalytic mechanism. The calmodulin-binding stretch occupies residues 290–311; sequence KNFARTHWKRAFNATSFLRHIR. The disordered stretch occupies residues 319 to 343; that stretch reads GEGASEQGMARHSHSGLRAGQPPKW.

The protein belongs to the protein kinase superfamily. CAMK Ser/Thr protein kinase family. CaMK subfamily. Phosphorylated by CAMKK1.

It is found in the cytoplasm. Its subcellular location is the nucleus. It carries out the reaction L-seryl-[protein] + ATP = O-phospho-L-seryl-[protein] + ADP + H(+). The catalysed reaction is L-threonyl-[protein] + ATP = O-phospho-L-threonyl-[protein] + ADP + H(+). Activated by Ca(2+)/calmodulin. Its function is as follows. Calcium/calmodulin-dependent protein kinase belonging to a proposed calcium-triggered signaling cascade. In vitro phosphorylates CREB1 and SYN1/synapsin I. Phosphorylates and activates CAMK1. This is Calcium/calmodulin-dependent protein kinase type 1B (PNCK) from Homo sapiens (Human).